The primary structure comprises 492 residues: Cytochrome P450 26A1 (492 aa).

Cys-438 contacts heme.

Belongs to the cytochrome P450 family. Requires heme as cofactor.

Its subcellular location is the endoplasmic reticulum membrane. The protein resides in the microsome membrane. The enzyme catalyses all-trans-retinoate + reduced [NADPH--hemoprotein reductase] + O2 = all-trans-(4S)-hydroxyretinoate + oxidized [NADPH--hemoprotein reductase] + H2O + H(+). A cytochrome P450 monooxygenase involved in the metabolism of all-trans retinoic acid (atRA), a signaling molecule that binds to retinoic acid receptors and regulates gene transcription. Mechanistically, uses molecular oxygen inserting one oxygen atom into a substrate, and reducing the second into a water molecule, with two electrons provided by NADPH via cytochrome P450 reductase (CPR; NADPH-ferrihemoprotein reductase). Catalyzes the hydroxylation of carbon hydrogen bonds of atRA primarily at C-4. Has no activity toward 9-cis and 13-cis retinoic acid stereoisomers. May play a role in the oxidative metabolism of xenobiotics such as tazarotenic acid. This Danio rerio (Zebrafish) protein is Cytochrome P450 26A1 (cyp26a1).